We begin with the raw amino-acid sequence, 302 residues long: Sulfate adenylyltransferase subunit 2 (302 aa).

This sequence belongs to the PAPS reductase family. CysD subfamily. Heterodimer composed of CysD, the smaller subunit, and CysN.

The enzyme catalyses sulfate + ATP + H(+) = adenosine 5'-phosphosulfate + diphosphate. The protein operates within sulfur metabolism; hydrogen sulfide biosynthesis; sulfite from sulfate: step 1/3. In terms of biological role, with CysN forms the ATP sulfurylase (ATPS) that catalyzes the adenylation of sulfate producing adenosine 5'-phosphosulfate (APS) and diphosphate, the first enzymatic step in sulfur assimilation pathway. APS synthesis involves the formation of a high-energy phosphoric-sulfuric acid anhydride bond driven by GTP hydrolysis by CysN coupled to ATP hydrolysis by CysD. The protein is Sulfate adenylyltransferase subunit 2 of Escherichia coli O7:K1 (strain IAI39 / ExPEC).